An 83-amino-acid polypeptide reads, in one-letter code: Short neurotoxin NCA-02/NCA-05/UER-05 (83 aa).

The first 21 residues, 1 to 21 (MKTLLLTLVVVTMVCLDLGYT), serve as a signal peptide directing secretion. Cystine bridges form between cysteine 24/cysteine 45, cysteine 38/cysteine 62, cysteine 64/cysteine 75, and cysteine 76/cysteine 81.

It belongs to the three-finger toxin family. Short-chain subfamily. Type I alpha-neurotoxin sub-subfamily. Expressed by the venom gland.

Its subcellular location is the secreted. Its function is as follows. Binds to muscle nicotinic acetylcholine receptor (nAChR) and inhibit acetylcholine from binding to the receptor, thereby impairing neuromuscular transmission. The polypeptide is Short neurotoxin NCA-02/NCA-05/UER-05 (Laticauda colubrina (Yellow-lipped sea krait)).